The primary structure comprises 266 residues: Thymidylate synthase (266 aa).

Residue arginine 24 coordinates dUMP. Histidine 54 lines the (6R)-5,10-methylene-5,6,7,8-tetrahydrofolate pocket. 129–130 (RR) contributes to the dUMP binding site. Cysteine 149 functions as the Nucleophile in the catalytic mechanism. DUMP contacts are provided by residues 169–172 (RSAD), asparagine 180, and 210–212 (HIY). (6R)-5,10-methylene-5,6,7,8-tetrahydrofolate is bound at residue aspartate 172. Alanine 265 contributes to the (6R)-5,10-methylene-5,6,7,8-tetrahydrofolate binding site.

It belongs to the thymidylate synthase family. Bacterial-type ThyA subfamily. In terms of assembly, homodimer.

Its subcellular location is the cytoplasm. It carries out the reaction dUMP + (6R)-5,10-methylene-5,6,7,8-tetrahydrofolate = 7,8-dihydrofolate + dTMP. The protein operates within pyrimidine metabolism; dTTP biosynthesis. Functionally, catalyzes the reductive methylation of 2'-deoxyuridine-5'-monophosphate (dUMP) to 2'-deoxythymidine-5'-monophosphate (dTMP) while utilizing 5,10-methylenetetrahydrofolate (mTHF) as the methyl donor and reductant in the reaction, yielding dihydrofolate (DHF) as a by-product. This enzymatic reaction provides an intracellular de novo source of dTMP, an essential precursor for DNA biosynthesis. This is Thymidylate synthase from Mycolicibacterium smegmatis (strain ATCC 700084 / mc(2)155) (Mycobacterium smegmatis).